A 781-amino-acid polypeptide reads, in one-letter code: Ubiquitin carboxyl-terminal hydrolase 14 (781 aa).

A UBP-type zinc finger spans residues Ser169–Ile279. Zn(2+) contacts are provided by Cys171, His173, Cys192, Cys195, Cys204, Cys207, Cys212, His224, His228, His235, Cys253, and Cys256. Residues Cys323–Cys781 form the USP domain. The active-site Nucleophile is the Cys332. UBA domains lie at Asp576–His626 and Glu649–Asn689. His737 serves as the catalytic Proton acceptor.

It belongs to the peptidase C19 family.

The protein resides in the cytoplasm. It is found in the nucleus. The enzyme catalyses Thiol-dependent hydrolysis of ester, thioester, amide, peptide and isopeptide bonds formed by the C-terminal Gly of ubiquitin (a 76-residue protein attached to proteins as an intracellular targeting signal).. In terms of biological role, required for the adaptation to the presence of glucose in the growth medium; mediates the degradation of enzymes involved in gluconeogenesis when cells are shifted to glucose-containing medium. Required for proteasome-dependent catabolite degradation of fructose-1,6-bisphosphatase (FBP1). Accelerates proteasomal breakdown of ubiquitinated proteins as it disassembles free ubiquitin chains that would compete with ubiquitinated proteins to bind to the proteasome. The protein is Ubiquitin carboxyl-terminal hydrolase 14 (UBP14) of Saccharomyces cerevisiae (strain ATCC 204508 / S288c) (Baker's yeast).